A 226-amino-acid polypeptide reads, in one-letter code: Flagellar L-ring protein (226 aa).

The signal sequence occupies residues 1–15; it reads MRILGLSAALLILGG. The N-palmitoyl cysteine moiety is linked to residue Cys16. The S-diacylglycerol cysteine moiety is linked to residue Cys16.

Belongs to the FlgH family. The basal body constitutes a major portion of the flagellar organelle and consists of four rings (L,P,S, and M) mounted on a central rod.

It is found in the cell outer membrane. Its subcellular location is the bacterial flagellum basal body. In terms of biological role, assembles around the rod to form the L-ring and probably protects the motor/basal body from shearing forces during rotation. This is Flagellar L-ring protein from Alteromonas mediterranea (strain DSM 17117 / CIP 110805 / LMG 28347 / Deep ecotype).